Here is a 153-residue protein sequence, read N- to C-terminus: ATP synthase subunit b' (153 aa).

A helical membrane pass occupies residues 20 to 40 (TLPLMAVQVVLLTFILNALFF).

It belongs to the ATPase B chain family. As to quaternary structure, F-type ATPases have 2 components, F(1) - the catalytic core - and F(0) - the membrane proton channel. F(1) has five subunits: alpha(3), beta(3), gamma(1), delta(1), epsilon(1). F(0) has four main subunits: a(1), b(1), b'(1) and c(10-14). The alpha and beta chains form an alternating ring which encloses part of the gamma chain. F(1) is attached to F(0) by a central stalk formed by the gamma and epsilon chains, while a peripheral stalk is formed by the delta, b and b' chains.

Its subcellular location is the cellular thylakoid membrane. F(1)F(0) ATP synthase produces ATP from ADP in the presence of a proton or sodium gradient. F-type ATPases consist of two structural domains, F(1) containing the extramembraneous catalytic core and F(0) containing the membrane proton channel, linked together by a central stalk and a peripheral stalk. During catalysis, ATP synthesis in the catalytic domain of F(1) is coupled via a rotary mechanism of the central stalk subunits to proton translocation. Functionally, component of the F(0) channel, it forms part of the peripheral stalk, linking F(1) to F(0). The b'-subunit is a diverged and duplicated form of b found in plants and photosynthetic bacteria. In Prochlorococcus marinus (strain MIT 9211), this protein is ATP synthase subunit b'.